Consider the following 122-residue polypeptide: Large ribosomal subunit protein bL20 (122 aa).

The protein belongs to the bacterial ribosomal protein bL20 family.

In terms of biological role, binds directly to 23S ribosomal RNA and is necessary for the in vitro assembly process of the 50S ribosomal subunit. It is not involved in the protein synthesizing functions of that subunit. This chain is Large ribosomal subunit protein bL20 (rplT), found in Treponema pallidum (strain Nichols).